A 495-amino-acid polypeptide reads, in one-letter code: NADH-ubiquinone oxidoreductase chain 4 (495 aa).

The next 12 membrane-spanning stretches (helical) occupy residues 9 to 29 (YFNL…LLFI), 39 to 59 (LIGL…WIQF), 89 to 109 (ISLF…LVGW), 118 to 138 (EYII…CMLD), 173 to 193 (FFLY…LILF), 214 to 234 (IFLW…VPVH), 245 to 265 (PTAG…YGFL), 272 to 292 (FPEA…IAII), 335 to 355 (ILLM…VGVL), 367 to 387 (YGGL…FTLA), 413 to 433 (LVAT…LWLY), and 457 to 477 (VFIF…PKVF).

The protein belongs to the complex I subunit 4 family. As to quaternary structure, complex I is composed of at least 49 different subunits.

It localises to the mitochondrion inner membrane. It carries out the reaction a ubiquinone + NADH + 5 H(+)(in) = a ubiquinol + NAD(+) + 4 H(+)(out). Functionally, core subunit of the mitochondrial membrane respiratory chain NADH dehydrogenase (Complex I) that is believed to belong to the minimal assembly required for catalysis. Complex I functions in the transfer of electrons from NADH to the respiratory chain. The immediate electron acceptor for the enzyme is believed to be ubiquinone. This Arabidopsis thaliana (Mouse-ear cress) protein is NADH-ubiquinone oxidoreductase chain 4 (ND4).